A 275-amino-acid chain; its full sequence is Large ribosomal subunit protein uL2 (275 aa).

Disordered regions lie at residues 36–55 and 223–275; these read PKKR…RHKG and VVMN…RHAR.

The protein belongs to the universal ribosomal protein uL2 family. Part of the 50S ribosomal subunit. Forms a bridge to the 30S subunit in the 70S ribosome.

In terms of biological role, one of the primary rRNA binding proteins. Required for association of the 30S and 50S subunits to form the 70S ribosome, for tRNA binding and peptide bond formation. It has been suggested to have peptidyltransferase activity; this is somewhat controversial. Makes several contacts with the 16S rRNA in the 70S ribosome. This chain is Large ribosomal subunit protein uL2, found in Thiobacillus denitrificans (strain ATCC 25259 / T1).